A 22-amino-acid chain; its full sequence is Mu-conotoxin SxIIIA (22 aa).

Cystine bridges form between Cys-2–Cys-15, Cys-3–Cys-20, and Cys-10–Cys-21. Position 22 is an alanine amide (Ala-22).

Belongs to the conotoxin M superfamily. In terms of tissue distribution, expressed by the venom duct.

It is found in the secreted. Functionally, mu-conotoxins block voltage-gated sodium channels (Nav). This synthetic toxin potently blocks rNav1.4/SCN4A (IC(50)= 7 nM). It also moderately blocks rNav1.1/SCN1A (IC(50)=370 nM), rNav1.2/SCN2A (IC(50)=1 uM), and mNav1.6/SCN6A (IC(50)=570 nM). It is noteworthy that coexpression of subunits beta-2 or beta-4 (but not beta-1 or beta-3) decrease by more that 10-fold the binding potency of the toxin to rNav1.6. It is also noteworthy that the toxin is 50-fold more potent on mouse Nav1.6 than on rat Nav1.6. In vivo, when injected intraperitoneally or subcutaneously in mice, causes motor impairment, paralysis and death. The protein is Mu-conotoxin SxIIIA of Conus striolatus (Cone snail).